The sequence spans 86 residues: Small ribosomal subunit protein uS17 (86 aa).

It belongs to the universal ribosomal protein uS17 family. As to quaternary structure, part of the 30S ribosomal subunit.

Functionally, one of the primary rRNA binding proteins, it binds specifically to the 5'-end of 16S ribosomal RNA. This Chlamydia pneumoniae (Chlamydophila pneumoniae) protein is Small ribosomal subunit protein uS17.